Consider the following 335-residue polypeptide: Glyceraldehyde-3-phosphate dehydrogenase (335 aa).

Residues 12–13, Asp-34, Arg-78, and Ser-120 each bind NAD(+); that span reads RI. D-glyceraldehyde 3-phosphate-binding positions include 151–153 and Thr-182; that span reads SCT. Cys-152 (nucleophile) is an active-site residue. Asn-183 is a binding site for NAD(+). Residues Arg-197, 210 to 211, and Arg-233 each bind D-glyceraldehyde 3-phosphate; that span reads TG. Asn-315 lines the NAD(+) pocket.

This sequence belongs to the glyceraldehyde-3-phosphate dehydrogenase family. In terms of assembly, homotetramer.

The protein resides in the cytoplasm. It carries out the reaction D-glyceraldehyde 3-phosphate + phosphate + NAD(+) = (2R)-3-phospho-glyceroyl phosphate + NADH + H(+). It functions in the pathway carbohydrate degradation; glycolysis; pyruvate from D-glyceraldehyde 3-phosphate: step 1/5. Functionally, catalyzes the oxidative phosphorylation of glyceraldehyde 3-phosphate (G3P) to 1,3-bisphosphoglycerate (BPG) using the cofactor NAD. The first reaction step involves the formation of a hemiacetal intermediate between G3P and a cysteine residue, and this hemiacetal intermediate is then oxidized to a thioester, with concomitant reduction of NAD to NADH. The reduced NADH is then exchanged with the second NAD, and the thioester is attacked by a nucleophilic inorganic phosphate to produce BPG. In Priestia megaterium (strain DSM 319 / IMG 1521) (Bacillus megaterium), this protein is Glyceraldehyde-3-phosphate dehydrogenase (gap).